A 337-amino-acid chain; its full sequence is Riboflavin biosynthesis protein RibD (337 aa).

The segment at 1-157 is deaminase; sequence MDSNPGADQA…IPWLKSVQLR (157 aa). Positions 13-124 constitute a CMP/dCMP-type deaminase domain; the sequence is PIVEQALRTA…DPNPSAGGGE (112 aa). Position 63 (His-63) interacts with Zn(2+). Glu-65 serves as the catalytic Proton donor. Zn(2+) is bound by residues Cys-88 and Cys-97. The reductase stretch occupies residues 158 to 337; that stretch reads RPHVTLKFAQ…CPRAASGAGR (180 aa). NADP(+) contacts are provided by residues Ala-166 and 173–176; that span reads TAAA. Ser-180 contributes to the substrate binding site. Trp-182 contacts NADP(+). Arg-196 contacts substrate. The NADP(+) site is built by Thr-208 and Asp-212. Positions 216, 219, and 279 each coordinate substrate. 281–287 contributes to the NADP(+) binding site; that stretch reads GAGLASG.

This sequence in the N-terminal section; belongs to the cytidine and deoxycytidylate deaminase family. In the C-terminal section; belongs to the HTP reductase family. The cofactor is Zn(2+).

It carries out the reaction 2,5-diamino-6-hydroxy-4-(5-phosphoribosylamino)-pyrimidine + H2O + H(+) = 5-amino-6-(5-phospho-D-ribosylamino)uracil + NH4(+). The enzyme catalyses 5-amino-6-(5-phospho-D-ribitylamino)uracil + NADP(+) = 5-amino-6-(5-phospho-D-ribosylamino)uracil + NADPH + H(+). Its pathway is cofactor biosynthesis; riboflavin biosynthesis; 5-amino-6-(D-ribitylamino)uracil from GTP: step 2/4. It functions in the pathway cofactor biosynthesis; riboflavin biosynthesis; 5-amino-6-(D-ribitylamino)uracil from GTP: step 3/4. Functionally, converts 2,5-diamino-6-(ribosylamino)-4(3h)-pyrimidinone 5'-phosphate into 5-amino-6-(ribosylamino)-2,4(1h,3h)-pyrimidinedione 5'-phosphate. In Corynebacterium ammoniagenes (Brevibacterium ammoniagenes), this protein is Riboflavin biosynthesis protein RibD (ribD).